The following is a 210-amino-acid chain: Outer-membrane lipoprotein carrier protein (210 aa).

The N-terminal stretch at 1–26 is a signal peptide; that stretch reads MHMIRRAAGALAVFAVAALAAAPAWA.

It belongs to the LolA family. As to quaternary structure, monomer.

Its subcellular location is the periplasm. In terms of biological role, participates in the translocation of lipoproteins from the inner membrane to the outer membrane. Only forms a complex with a lipoprotein if the residue after the N-terminal Cys is not an aspartate (The Asp acts as a targeting signal to indicate that the lipoprotein should stay in the inner membrane). This chain is Outer-membrane lipoprotein carrier protein, found in Bordetella pertussis (strain Tohama I / ATCC BAA-589 / NCTC 13251).